Here is a 434-residue protein sequence, read N- to C-terminus: T-box transcription factor T homolog (434 aa).

The segment at residues 50–220 (LWKKFHKLTN…YNPFAKAFLD (171 aa)) is a DNA-binding region (T-box). Composition is skewed to polar residues over residues 355 to 364 (SGFSHVSSPQ) and 376 to 385 (HPTSSHQHNL). The segment at 355–385 (SGFSHVSSPQSPLPTGLFRNPHPTSSHQHNL) is disordered.

In terms of tissue distribution, in the developing embryo, expressed in the mesenchyme founder cells, vegetal plate of the mesenchyme blastula, extending tip of the invaginating archenteron and, later, in the secondary mesenchyme cells.

The protein localises to the nucleus. Its function is as follows. Involved in the transcriptional regulation of genes required for mesoderm differentiation. The polypeptide is T-box transcription factor T homolog (Hemicentrotus pulcherrimus (Sea urchin)).